We begin with the raw amino-acid sequence, 344 residues long: MNYSKYETMKQLIADMKLPDYRYEQIIKAIFSQHTSTFEKMSTLPLELKKSLINTFGPSVCCTVPVACQTSGQADKILFSLPDGNRVETVNLHYKKGWESFCISSQCGCGFGCQFCATGTLGHKRNMTADEITDQLLYFHLNGHKLNSISFMGMGEPLANPNLFDALNILNDSSLFGLSQRRITISTIGIIPGIKRLTHEFPQINLAYSLHSPFENQRSELMPVNRSFPLHEVMNALDNHIRHTGRRLFLAYIMLNGVNDSVDHAKALVELLQDRGPWAHLYHVDLIPYNATDKTPRKFASSDKITMKRFRDILHANGISVATRTQFGSDISAACGQLLGEKDV.

Catalysis depends on Glu88, which acts as the Proton acceptor. The Radical SAM core domain maps to 95–324; that stretch reads KKGWESFCIS…HANGISVATR (230 aa). A disulfide bond links Cys102 and Cys335. Cys109, Cys113, and Cys116 together coordinate [4Fe-4S] cluster. S-adenosyl-L-methionine is bound by residues 155-156, Ser186, 209-211, and Asn290; these read GE and SLH. The active-site S-methylcysteine intermediate is the Cys335.

The protein belongs to the radical SAM superfamily. RlmN family. Cfr subfamily. Requires [4Fe-4S] cluster as cofactor.

It localises to the cytoplasm. The enzyme catalyses adenosine(2503) in 23S rRNA + 2 reduced [2Fe-2S]-[ferredoxin] + 2 S-adenosyl-L-methionine = 8-methyladenosine(2503) in 23S rRNA + 5'-deoxyadenosine + L-methionine + 2 oxidized [2Fe-2S]-[ferredoxin] + S-adenosyl-L-homocysteine. Its function is as follows. Specifically methylates position 8 of adenine 2503 in 23S rRNA. Confers resistance to some classes of antibiotics. In Lachnoclostridium phytofermentans (strain ATCC 700394 / DSM 18823 / ISDg) (Clostridium phytofermentans), this protein is Ribosomal RNA large subunit methyltransferase Cfr.